The primary structure comprises 177 residues: MSEVTTIARPYAKAAFDFAVEQKAVDSWLSMLLFAAEVSKDDTVQQVIHSSMAPEQLAQLFNQICGEQLNEQGQNLIRVMAENGRLSVLPAVVAEFSALKAELDKELEAQITSAAALSEAEKVKIQKSLEARYQRTVRLNCQLDPSLMAGLVIKIGDDIIDASVRSKLNRLAEALQS.

It belongs to the ATPase delta chain family. In terms of assembly, F-type ATPases have 2 components, F(1) - the catalytic core - and F(0) - the membrane proton channel. F(1) has five subunits: alpha(3), beta(3), gamma(1), delta(1), epsilon(1). F(0) has three main subunits: a(1), b(2) and c(10-14). The alpha and beta chains form an alternating ring which encloses part of the gamma chain. F(1) is attached to F(0) by a central stalk formed by the gamma and epsilon chains, while a peripheral stalk is formed by the delta and b chains.

Its subcellular location is the cell inner membrane. F(1)F(0) ATP synthase produces ATP from ADP in the presence of a proton or sodium gradient. F-type ATPases consist of two structural domains, F(1) containing the extramembraneous catalytic core and F(0) containing the membrane proton channel, linked together by a central stalk and a peripheral stalk. During catalysis, ATP synthesis in the catalytic domain of F(1) is coupled via a rotary mechanism of the central stalk subunits to proton translocation. Functionally, this protein is part of the stalk that links CF(0) to CF(1). It either transmits conformational changes from CF(0) to CF(1) or is implicated in proton conduction. The chain is ATP synthase subunit delta from Tolumonas auensis (strain DSM 9187 / NBRC 110442 / TA 4).